The following is a 23-amino-acid chain: Dahlein-4.3 (23 aa).

In terms of tissue distribution, expressed by the skin dorsal glands.

Its subcellular location is the secreted. Functionally, has no antimicrobial activity. The chain is Dahlein-4.3 from Ranoidea dahlii (Dahl's aquatic frog).